Here is a 304-residue protein sequence, read N- to C-terminus: RIGRLVLRAAIDKGASVVAVNDPFIDVNYMVYLFKFDSTHGRFKGTVVAEGGFLVVNGQKITVFSERDPANINWASAGAEYVVESTGVFTTIEKASTHLKGGAKKVVISAPSADAPMFVCGVNLDAYKPDMKVVSNASCTTNCLAPLAKVINDNFEIVEGLMTTVHATTATQKTVDGPSGKLWRDGRGAAQNIIPAATGAAKAVGKVIPALNGKLTGMAFRVPTPNVSVVDLTVRLGKGASYDEIKAKVQEAANGPLKGILGYTDEEVVSTDFLSDTHSSVFDAKAGISLNDKFVKLISWYDNE.

NAD(+) is bound by residues 1–2 (RI), aspartate 22, and arginine 67. D-glyceraldehyde 3-phosphate is bound by residues 138–140 (SCT), threonine 169, 198–199 (TG), and arginine 221. The active-site Nucleophile is cysteine 139. NAD(+) is bound at residue asparagine 303.

It belongs to the glyceraldehyde-3-phosphate dehydrogenase family. As to quaternary structure, homotetramer.

It is found in the cytoplasm. The enzyme catalyses D-glyceraldehyde 3-phosphate + phosphate + NAD(+) = (2R)-3-phospho-glyceroyl phosphate + NADH + H(+). Its pathway is carbohydrate degradation; glycolysis; pyruvate from D-glyceraldehyde 3-phosphate: step 1/5. This chain is Glyceraldehyde-3-phosphate dehydrogenase 2 (Gapdh2), found in Drosophila subobscura (Fruit fly).